A 339-amino-acid chain; its full sequence is DNA-directed RNA polymerase subunit alpha (339 aa).

Residues 1–233 (MVREEVAGST…DLFLPFLHAE (233 aa)) are alpha N-terminal domain (alpha-NTD). Residues 264–339 (KKGIPLNCIF…IDLLKNKLSF (76 aa)) form an alpha C-terminal domain (alpha-CTD) region.

It belongs to the RNA polymerase alpha chain family. In plastids the minimal PEP RNA polymerase catalytic core is composed of four subunits: alpha, beta, beta', and beta''. When a (nuclear-encoded) sigma factor is associated with the core the holoenzyme is formed, which can initiate transcription.

It localises to the plastid. The protein localises to the chloroplast. The catalysed reaction is RNA(n) + a ribonucleoside 5'-triphosphate = RNA(n+1) + diphosphate. In terms of biological role, DNA-dependent RNA polymerase catalyzes the transcription of DNA into RNA using the four ribonucleoside triphosphates as substrates. In Crithopsis delileana, this protein is DNA-directed RNA polymerase subunit alpha.